Here is a 193-residue protein sequence, read N- to C-terminus: Threonylcarbamoyl-AMP synthase (193 aa).

The 180-residue stretch at 14–193 (SRLQQRARKQ…IDLESGRVLR (180 aa)) folds into the YrdC-like domain.

It belongs to the SUA5 family. TsaC subfamily.

It localises to the cytoplasm. It carries out the reaction L-threonine + hydrogencarbonate + ATP = L-threonylcarbamoyladenylate + diphosphate + H2O. In terms of biological role, required for the formation of a threonylcarbamoyl group on adenosine at position 37 (t(6)A37) in tRNAs that read codons beginning with adenine. Catalyzes the conversion of L-threonine, HCO(3)(-)/CO(2) and ATP to give threonylcarbamoyl-AMP (TC-AMP) as the acyladenylate intermediate, with the release of diphosphate. The sequence is that of Threonylcarbamoyl-AMP synthase from Chromobacterium violaceum (strain ATCC 12472 / DSM 30191 / JCM 1249 / CCUG 213 / NBRC 12614 / NCIMB 9131 / NCTC 9757 / MK).